The chain runs to 259 residues: Ribonuclease PH (259 aa).

Residues Arg88 and 126–128 (GTR) each bind phosphate.

It belongs to the RNase PH family. In terms of assembly, homohexameric ring arranged as a trimer of dimers.

The enzyme catalyses tRNA(n+1) + phosphate = tRNA(n) + a ribonucleoside 5'-diphosphate. Its function is as follows. Phosphorolytic 3'-5' exoribonuclease that plays an important role in tRNA 3'-end maturation. Removes nucleotide residues following the 3'-CCA terminus of tRNAs; can also add nucleotides to the ends of RNA molecules by using nucleoside diphosphates as substrates, but this may not be physiologically important. Probably plays a role in initiation of 16S rRNA degradation (leading to ribosome degradation) during starvation. The protein is Ribonuclease PH of Mycobacterium leprae (strain Br4923).